Reading from the N-terminus, the 465-residue chain is Sodium-dependent phosphate transport protein 1 (465 aa).

Residues Asn47 and Asn56 are each glycosylated (N-linked (GlcNAc...) asparagine). The next 10 helical transmembrane spans lie at 79–99 (GIIF…VGYI), 109–129 (IGFA…AAAV), 171–191 (MSLS…GIIC), 198–218 (MVFY…FVLY), 255–275 (AMIK…YLWT), 304–324 (LPYL…DFLM), 337–357 (LFTA…LYLS), 363–383 (TITF…GALI), 399–419 (VTTL…GLFL), and 428–448 (FKIF…YLIF).

It belongs to the major facilitator superfamily. Sodium/anion cotransporter family. In terms of assembly, interacts with PDZK1. Kidney cortex and liver.

It is found in the apical cell membrane. It catalyses the reaction 3 Na(+)(out) + phosphate(out) = 3 Na(+)(in) + phosphate(in). The enzyme catalyses urate(out) = urate(in). In terms of biological role, important for the resorption of phosphate by the kidney. May be involved in actively transporting phosphate into cells via Na(+) cotransport in the renal brush border membrane. Plays a role in urate transport in the kidney. In Oryctolagus cuniculus (Rabbit), this protein is Sodium-dependent phosphate transport protein 1 (SLC17A1).